Here is a 220-residue protein sequence, read N- to C-terminus: Ribose-5-phosphate isomerase A (220 aa).

Substrate is bound by residues 28–31, 81–84, and 94–97; these read TGST, DGAD, and KGGG. The active-site Proton acceptor is the Glu103. Residue Lys121 participates in substrate binding.

The protein belongs to the ribose 5-phosphate isomerase family. As to quaternary structure, homodimer.

The enzyme catalyses aldehydo-D-ribose 5-phosphate = D-ribulose 5-phosphate. Its pathway is carbohydrate degradation; pentose phosphate pathway; D-ribose 5-phosphate from D-ribulose 5-phosphate (non-oxidative stage): step 1/1. Catalyzes the reversible conversion of ribose-5-phosphate to ribulose 5-phosphate. This chain is Ribose-5-phosphate isomerase A, found in Leptothrix cholodnii (strain ATCC 51168 / LMG 8142 / SP-6) (Leptothrix discophora (strain SP-6)).